Consider the following 518-residue polypeptide: Bifunctional purine biosynthesis protein PurH (518 aa).

Residues 1–146 (MGRMALLSTS…KNHAHVTVLV (146 aa)) form the MGS-like domain.

This sequence belongs to the PurH family.

It catalyses the reaction (6R)-10-formyltetrahydrofolate + 5-amino-1-(5-phospho-beta-D-ribosyl)imidazole-4-carboxamide = 5-formamido-1-(5-phospho-D-ribosyl)imidazole-4-carboxamide + (6S)-5,6,7,8-tetrahydrofolate. The enzyme catalyses IMP + H2O = 5-formamido-1-(5-phospho-D-ribosyl)imidazole-4-carboxamide. It participates in purine metabolism; IMP biosynthesis via de novo pathway; 5-formamido-1-(5-phospho-D-ribosyl)imidazole-4-carboxamide from 5-amino-1-(5-phospho-D-ribosyl)imidazole-4-carboxamide (10-formyl THF route): step 1/1. Its pathway is purine metabolism; IMP biosynthesis via de novo pathway; IMP from 5-formamido-1-(5-phospho-D-ribosyl)imidazole-4-carboxamide: step 1/1. The chain is Bifunctional purine biosynthesis protein PurH from Thermosynechococcus vestitus (strain NIES-2133 / IAM M-273 / BP-1).